The primary structure comprises 854 residues: Translation initiation factor IF-2 (854 aa).

2 disordered regions span residues 52–79 and 128–265; these read RQHG…RDGG and RKQE…HGFQ. The segment covering 61–75 has biased composition (polar residues); it reads SQRITLQRKTTSTLS. Basic and acidic residues-rich tracts occupy residues 128–150 and 211–232; these read RKQE…RQEA and VRHD…DNKR. The segment covering 247-257 has biased composition (basic residues); the sequence is RGKLGRKNKKP. The 170-residue stretch at 354–523 folds into the tr-type G domain; the sequence is KRAPVVTVMG…LLQAEVLELT (170 aa). A G1 region spans residues 363-370; the sequence is GHVDHGKT. 363-370 serves as a coordination point for GTP; sequence GHVDHGKT. Positions 388-392 are G2; that stretch reads GITQH. Residues 409–412 are G3; that stretch reads DTPG. 409–413 is a GTP binding site; it reads DTPGH. The tract at residues 463-466 is G4; the sequence is TKID. Residues 499–501 are G5; that stretch reads SAK.

It belongs to the TRAFAC class translation factor GTPase superfamily. Classic translation factor GTPase family. IF-2 subfamily.

The protein localises to the cytoplasm. Functionally, one of the essential components for the initiation of protein synthesis. Protects formylmethionyl-tRNA from spontaneous hydrolysis and promotes its binding to the 30S ribosomal subunits. Also involved in the hydrolysis of GTP during the formation of the 70S ribosomal complex. The protein is Translation initiation factor IF-2 of Marinomonas sp. (strain MWYL1).